Consider the following 563-residue polypeptide: Membrane protein insertase YidC (563 aa).

Residues 6 to 26 traverse the membrane as a helical segment; the sequence is TVLWMIFSFSLLLLWNNWQIH. The interval 36–70 is disordered; sequence PAPEAAATQQPKADANGTAASSTASIPSSPAAAPA. Residues 54 to 70 show a composition bias toward low complexity; the sequence is AASSTASIPSSPAAAPA. Helical transmembrane passes span 373–393, 443–463, 482–502, and 512–532; these read WGWT…PLAA, LPMV…LASV, PFFI…KLNP, and VMMI…AGLV.

It belongs to the OXA1/ALB3/YidC family. Type 1 subfamily. Interacts with the Sec translocase complex via SecD. Specifically interacts with transmembrane segments of nascent integral membrane proteins during membrane integration.

Its subcellular location is the cell inner membrane. Its function is as follows. Required for the insertion and/or proper folding and/or complex formation of integral membrane proteins into the membrane. Involved in integration of membrane proteins that insert both dependently and independently of the Sec translocase complex, as well as at least some lipoproteins. Aids folding of multispanning membrane proteins. The protein is Membrane protein insertase YidC of Bordetella parapertussis (strain 12822 / ATCC BAA-587 / NCTC 13253).